Consider the following 631-residue polypeptide: Leukocyte immunoglobulin-like receptor subfamily B member 3 (631 aa).

The N-terminal stretch at 1–23 is a signal peptide; that stretch reads MTPALTALLCLGLSLGPRTRVQA. Over 24-443 the chain is Extracellular; that stretch reads GPFPKPTLWA…STPGLGRYLE (420 aa). Ig-like C2-type domains are found at residues 42–100, 111–229, 225–314, and 338–419; these read GSPV…RCHY, DPLE…SLLT, PSLL…DPLN, and GENV…LVVS. A disulfide bond links Cys-49 and Cys-98. Residues 59 to 70 show a composition bias toward basic and acidic residues; sequence RLHKEGSPEPLD. The disordered stretch occupies residues 59–78; the sequence is RLHKEGSPEPLDRNNPLEPK. Residue Asn-139 is glycosylated (N-linked (GlcNAc...) asparagine). Disulfide bonds link Cys-144–Cys-196 and Cys-245–Cys-296. N-linked (GlcNAc...) asparagine glycans are attached at residues Asn-280, Asn-301, and Asn-340. A disulfide bridge links Cys-345 with Cys-396. Residues 444–464 form a helical membrane-spanning segment; that stretch reads VLIGVSVAFVLLLFLLLFLLL. Topologically, residues 465 to 631 are cytoplasmic; sequence RRQRHSKHRT…PSIYATLAIH (167 aa). The interval 470 to 631 is disordered; sequence SKHRTSDQRK…PSIYATLAIH (162 aa). Positions 473–482 are enriched in basic and acidic residues; the sequence is RTSDQRKTDF. The ITIM motif 1 motif lies at 512 to 517; that stretch reads NLYAAV. Basic and acidic residues-rich tracts occupy residues 520-537 and 567-581; these read TQSE…HDED and LDTK…RQMD. The segment covering 588–600 has biased composition (polar residues); that stretch reads EASQDVTYAQLHS. Short sequence motifs (ITIM motif) lie at residues 593–598 and 623–628; these read VTYAQL and SIYATL. A phosphotyrosine; by LYN mark is found at Tyr-595 and Tyr-625.

Interacts with LYN, PTPN6/SHP-1 and PTPN11/SHP-2. Post-translationally, phosphorylated on tyrosine residues by LYN. Phosphorylation at Tyr-595 and Tyr-625 is important for interaction with PTPN6/SHP-1 and PTPN11/SHP-2. Detected in monocytes and B-cells.

It is found in the cell membrane. Its function is as follows. May act as receptor for class I MHC antigens. Becomes activated upon coligation of LILRB3 and immune receptors, such as FCGR2B and the B-cell receptor. Down-regulates antigen-induced B-cell activation by recruiting phosphatases to its immunoreceptor tyrosine-based inhibitor motifs (ITIM). This is Leukocyte immunoglobulin-like receptor subfamily B member 3 (LILRB3) from Homo sapiens (Human).